A 242-amino-acid chain; its full sequence is Venom nerve growth factor 2 (242 aa).

A signal peptide spans Met1–Ala18. A propeptide spanning residues Ala19 to Arg125 is cleaved from the precursor. The span at Asp47–Asp66 shows a compositional bias: basic and acidic residues. Residues Asp47 to Gly70 are disordered. Intrachain disulfides connect Cys139/Cys203, Cys181/Cys231, and Cys191/Cys233.

Belongs to the NGF-beta family. In terms of assembly, homodimer; non-covalently linked. Expressed by the venom gland.

Its subcellular location is the secreted. In terms of biological role, nerve growth factor is important for the development and maintenance of the sympathetic and sensory nervous systems. It stimulates division and differentiation of sympathetic and embryonic sensory neurons as well as basal forebrain cholinergic neurons in the brain. Its relevance in the snake venom is not clear. However, it has been shown to inhibit metalloproteinase-dependent proteolysis of platelet glycoprotein Ib alpha, suggesting a metalloproteinase inhibition to prevent metalloprotease autodigestion and/or protection against prey proteases. Binds a lipid between the two protein chains in the homodimer. The lipid-bound form promotes histamine relase from mouse mast cells, contrary to the lipid-free form. This is Venom nerve growth factor 2 from Pseudechis australis (Mulga snake).